Consider the following 575-residue polypeptide: MEAITKNGSLSQTLVHCGPKSLSSFIPVRCLRFSKNPFPKKLVVTRARTSINSDHEAANRPLFQFPPSLLDDRFLSISANQSEIDSLGRDIEALKAKVSEKLVCMDVKERIHLIHLLVSLGVAYHFEKQIEEFLKVDFENVEDMNLGEEDMYSISVIFRVFRLYRHKLSSDVFNRFKEENGDFKKCLLDDKKSLTKQWASRGNTWNYFVGGSNEEHLSGHIKNVLYLSQQENAEVVMSREYIQFYEQETHHDETLLKFAKINFKFMQLHYVQELQTIVKWWKELDLESKIPNYYRVRAVECLYWAMAVYMEPQYSVARIILSKSLVLWTIIDDLYDAYCTLPEAIAFTENMERWETDAIDMPDHMKVLLRSLIDLMEDFKGEVRSEGRLYSVEYGIDEWKRLFRADLTISKWARTGYIPNYDEYMEVGIVTGGVDVTVAFAFIGMGEAGKEAFDWIRSRPKFIQTIDLKSRLRDDVATYKDEMARGEIATGINCYMKQYKVTEEEAFLEFHRRIKHTSKLVNEEYFKTTVPLKLVRIAFNVGRVIDTNYKHGDGLTYTGIVGGQITSLFLDLITI.

The N-terminal 52 residues, 1-52 (MEAITKNGSLSQTLVHCGPKSLSSFIPVRCLRFSKNPFPKKLVVTRARTSIN), are a transit peptide targeting the chloroplast. Aspartate 332, aspartate 336, aspartate 474, threonine 478, and glutamate 482 together coordinate Mg(2+). The DDXXD motif motif lies at 332 to 336 (DDLYD).

Belongs to the terpene synthase family. Tpsa subfamily. As to expression, predominantly expressed in roots but also in leaves and stems.

It is found in the plastid. Its subcellular location is the chloroplast. Does not possess diterpene synthase activity. The sequence is that of Inactive terpenoid synthase 20, chloroplastic from Arabidopsis thaliana (Mouse-ear cress).